Reading from the N-terminus, the 34-residue chain is Cytochrome b6-f complex subunit 7 (34 aa).

The helical transmembrane segment at 9 to 29 threads the bilayer; it reads ALLSFGLIFVGWALGALLLKI.

The protein belongs to the PetM family. In terms of assembly, the 4 large subunits of the cytochrome b6-f complex are cytochrome b6, subunit IV (17 kDa polypeptide, PetD), cytochrome f and the Rieske protein, while the 4 small subunits are PetG, PetL, PetM and PetN. The complex functions as a dimer.

Its subcellular location is the cellular thylakoid membrane. In terms of biological role, component of the cytochrome b6-f complex, which mediates electron transfer between photosystem II (PSII) and photosystem I (PSI), cyclic electron flow around PSI, and state transitions. In Nostoc sp. (strain PCC 7120 / SAG 25.82 / UTEX 2576), this protein is Cytochrome b6-f complex subunit 7.